The sequence spans 491 residues: Glutamyl-tRNA(Gln) amidotransferase subunit A (491 aa).

Residues Lys77 and Ser152 each act as charge relay system in the active site. Residue Ser176 is the Acyl-ester intermediate of the active site.

It belongs to the amidase family. GatA subfamily. As to quaternary structure, heterotrimer of A, B and C subunits.

The catalysed reaction is L-glutamyl-tRNA(Gln) + L-glutamine + ATP + H2O = L-glutaminyl-tRNA(Gln) + L-glutamate + ADP + phosphate + H(+). Functionally, allows the formation of correctly charged Gln-tRNA(Gln) through the transamidation of misacylated Glu-tRNA(Gln) in organisms which lack glutaminyl-tRNA synthetase. The reaction takes place in the presence of glutamine and ATP through an activated gamma-phospho-Glu-tRNA(Gln). The sequence is that of Glutamyl-tRNA(Gln) amidotransferase subunit A from Chlamydia abortus (strain DSM 27085 / S26/3) (Chlamydophila abortus).